The chain runs to 418 residues: Sialidase-3 (418 aa).

Residues 24–27 (YRIP) carry the FRIP motif motif. Positions 25 and 45 each coordinate substrate. Catalysis depends on Asp-50, which acts as the Proton acceptor. One copy of the BNR 1 repeat lies at 129-140 (LYSEDSGCSWGE). Residues Tyr-179 and Tyr-181 each coordinate substrate. Residues 201–212 (FYSDDLGVTWHC) form a BNR 2 repeat. Positions 223 and 243 each coordinate substrate. The stretch at 252-263 (AFSTDSGDCFQK) is one BNR 3 repeat. Arg-339 is a substrate binding site. Tyr-369 functions as the Nucleophile in the catalytic mechanism. Glu-386 is an active-site residue.

It belongs to the glycosyl hydrolase 33 family. In terms of assembly, interacts with CAV1; this interaction enhances NEU3 sialidase activity within caveola. Interacts with EGFR; this interaction mediates desialylation of EGFR enhancing downstream signaling. Palmitoylated; may regulate intracellular trafficking and anchorage to plasma membrane and endomembranes. In terms of tissue distribution, expressed in brain, cardiac muscle and weakly in liver.

Its subcellular location is the cell membrane. The protein resides in the membrane. The protein localises to the caveola. It is found in the early endosome membrane. It localises to the recycling endosome membrane. Its subcellular location is the lysosome membrane. It carries out the reaction Hydrolysis of alpha-(2-&gt;3)-, alpha-(2-&gt;6)-, alpha-(2-&gt;8)- glycosidic linkages of terminal sialic acid residues in oligosaccharides, glycoproteins, glycolipids, colominic acid and synthetic substrates.. The enzyme catalyses a ganglioside GD1a + H2O = a ganglioside GM1 + N-acetylneuraminate. It catalyses the reaction a ganglioside GD1a (d18:1(4E)) + H2O = a ganglioside GM1 (d18:1(4E)) + N-acetylneuraminate. The catalysed reaction is a ganglioside GD1b + H2O = a ganglioside GM1 + N-acetylneuraminate. It carries out the reaction a ganglioside GD1b (d18:1(4E)) + H2O = a ganglioside GM1 (d18:1(4E)) + N-acetylneuraminate. The enzyme catalyses a ganglioside GD3 + H2O = a ganglioside GM3 + N-acetylneuraminate. It catalyses the reaction a ganglioside GD3 (d18:1(4E)) + H2O = a ganglioside GM3 (d18:1(4E)) + N-acetylneuraminate. The catalysed reaction is a ganglioside GM3 + H2O = a beta-D-galactosyl-(1-&gt;4)-beta-D-glucosyl-(1&lt;-&gt;1)-ceramide + N-acetylneuraminate. It carries out the reaction a ganglioside GM1 + H2O = a ganglioside GA1 + N-acetylneuraminate. The enzyme catalyses a ganglioside GM1 (d18:1(4E)) + H2O = a ganglioside GA1 (d18:1(4E)) + N-acetylneuraminate. It catalyses the reaction a ganglioside GM2 (d18:1(4E)) + H2O = a ganglioside GA2 (d18:1(4E)) + N-acetylneuraminate. The catalysed reaction is a ganglioside GM3 (d18:1(4E)) + H2O = a beta-D-Gal-(1-&gt;4)-beta-D-Glc-(1&lt;-&gt;1)-Cer(d18:1(4E)) + N-acetylneuraminate. It carries out the reaction a ganglioside GT1b + H2O = a ganglioside GD1b + N-acetylneuraminate. Functionally, exo-alpha-sialidase that catalyzes the hydrolytic cleavage of the terminal sialic acid (N-acetylneuraminic acid, Neu5Ac) of a glycan moiety in the catabolism of glycolipids, glycoproteins and oligosacharides. Displays high catalytic efficiency for gangliosides including alpha-(2-&gt;3)-sialylated GD1a and GM3 and alpha-(2-&gt;8)-sialylated GD3. Plays a role in the regulation of transmembrane signaling through the modulation of ganglioside content of the lipid bilayer and by direct interaction with signaling receptors, such as EGFR. Desialylates EGFR and activates downstream signaling in proliferating cells. Contributes to clathrin-mediated endocytosis by regulating sorting of endocytosed receptors to early and recycling endosomes. This chain is Sialidase-3 (Neu3), found in Rattus norvegicus (Rat).